The following is a 222-amino-acid chain: Thiamine-phosphate synthase (222 aa).

4-amino-2-methyl-5-(diphosphooxymethyl)pyrimidine is bound by residues 44–48 and Asn-79; that span reads QFREK. Positions 80 and 99 each coordinate Mg(2+). Position 117 (Ser-117) interacts with 4-amino-2-methyl-5-(diphosphooxymethyl)pyrimidine. Residue 143–145 coordinates 2-[(2R,5Z)-2-carboxy-4-methylthiazol-5(2H)-ylidene]ethyl phosphate; the sequence is TET. A 4-amino-2-methyl-5-(diphosphooxymethyl)pyrimidine-binding site is contributed by Lys-146. Residues Gly-175 and 195-196 each bind 2-[(2R,5Z)-2-carboxy-4-methylthiazol-5(2H)-ylidene]ethyl phosphate; that span reads IS.

The protein belongs to the thiamine-phosphate synthase family. In terms of assembly, monomer. Requires Mg(2+) as cofactor.

It carries out the reaction 2-[(2R,5Z)-2-carboxy-4-methylthiazol-5(2H)-ylidene]ethyl phosphate + 4-amino-2-methyl-5-(diphosphooxymethyl)pyrimidine + 2 H(+) = thiamine phosphate + CO2 + diphosphate. It catalyses the reaction 2-(2-carboxy-4-methylthiazol-5-yl)ethyl phosphate + 4-amino-2-methyl-5-(diphosphooxymethyl)pyrimidine + 2 H(+) = thiamine phosphate + CO2 + diphosphate. The catalysed reaction is 4-methyl-5-(2-phosphooxyethyl)-thiazole + 4-amino-2-methyl-5-(diphosphooxymethyl)pyrimidine + H(+) = thiamine phosphate + diphosphate. Its pathway is cofactor biosynthesis; thiamine diphosphate biosynthesis; thiamine phosphate from 4-amino-2-methyl-5-diphosphomethylpyrimidine and 4-methyl-5-(2-phosphoethyl)-thiazole: step 1/1. In terms of biological role, condenses 4-methyl-5-(beta-hydroxyethyl)thiazole monophosphate (THZ-P) and 2-methyl-4-amino-5-hydroxymethyl pyrimidine pyrophosphate (HMP-PP) to form thiamine monophosphate (TMP). Is also able to use the 2-methoxy analog MeO-HMP-PP, as substrate in vitro, but not the 2-trifluoromethyl analog CF(3)-HMP-PP. In Bacillus subtilis (strain 168), this protein is Thiamine-phosphate synthase (thiE).